We begin with the raw amino-acid sequence, 446 residues long: Glutamine synthetase (446 aa).

The 86-residue stretch at 18–103 (ENVRYLRLQF…LICDVFKTDG (86 aa)) folds into the GS beta-grasp domain. The GS catalytic domain occupies 110–446 (PRANLKRVLR…WEREQYIKQY (337 aa)). Positions 134 and 136 each coordinate Mg(2+). Glu-186 serves as a coordination point for ATP. The Mg(2+) site is built by Glu-191 and Glu-198. Residues 242–243 (NG) and Gly-243 contribute to the L-glutamate site. His-247 serves as a coordination point for Mg(2+). Ser-251 is a binding site for ATP. The L-glutamate site is built by Arg-300, Glu-306, and Arg-318. ATP is bound by residues Arg-318 and Arg-323. Mg(2+) is bound at residue Glu-335. Position 337 (Arg-337) interacts with L-glutamate.

This sequence belongs to the glutamine synthetase family. Oligomer of 12 subunits arranged in the form of two hexagons. In its feedback-inhibited form, interacts with TnrA in order to block its DNA-binding activity. Requires Mg(2+) as cofactor.

The protein resides in the cytoplasm. It catalyses the reaction L-glutamate + NH4(+) + ATP = L-glutamine + ADP + phosphate + H(+). Inhibited by glutamine. In terms of biological role, glutamine synthetase (GS) is an unusual multitasking protein that functions as an enzyme, a transcription coregulator, and a chaperone in ammonium assimilation and in the regulation of genes involved in nitrogen metabolism. It catalyzes the ATP-dependent biosynthesis of glutamine from glutamate and ammonia. Feedback-inhibited GlnA also interacts with and regulates the activity of the transcriptional regulator TnrA. During nitrogen limitation, TnrA is in its DNA-binding active state and turns on the transcription of genes required for nitrogen assimilation. Under conditions of nitrogen excess, feedback-inhibited GlnA forms a stable complex with TnrA, which inhibits its DNA-binding activity. In contrast, feedback-inhibited GlnA acts as a chaperone to stabilize the DNA-binding activity of GlnR, which represses the transcription of nitrogen assimilation genes. This is Glutamine synthetase from Staphylococcus epidermidis (strain ATCC 35984 / DSM 28319 / BCRC 17069 / CCUG 31568 / BM 3577 / RP62A).